The chain runs to 99 residues: Large ribosomal subunit protein eL21 (99 aa).

Belongs to the eukaryotic ribosomal protein eL21 family.

This chain is Large ribosomal subunit protein eL21, found in Pyrobaculum calidifontis (strain DSM 21063 / JCM 11548 / VA1).